Reading from the N-terminus, the 399-residue chain is Proteinase-activated receptor 2 (399 aa).

Residues 1-25 (MRSLSLAWLLGGITLLAASVSCSRT) form the signal peptide. Residues 26–38 (ENLAPGRNNSKGR) constitute a propeptide, removed for receptor activation. Asparagine 33 carries an N-linked (GlcNAc...) asparagine glycan. The Extracellular segment spans residues 39-73 (SLIGRLETQPPITGKGVPVEPGFSIDEFSASILTG). The helical transmembrane segment at 74–103 (KLTTVFLPVVYIIVFVIGLPSNGMALWIFL) threads the bilayer. Topologically, residues 104 to 110 (FRTKKKH) are cytoplasmic. Residues 111–139 (PAVIYMANLALADLLSVIWFPLKISYHLH) traverse the membrane as a helical segment. Topologically, residues 140-151 (GNNWVYGEALCK) are extracellular. Cysteines 150 and 228 form a disulfide. A helical transmembrane segment spans residues 152–179 (VLIGFFYGNMYCSILFMTCLSVQRYWVI). At 180-185 (VNPMGH) the chain is on the cytoplasmic side. The chain crosses the membrane as a helical span at residues 186–213 (PRKKANIAVGVSLAIWLLIFLVTIPLYV). Residues 214–237 (MKQTIYIPALNITTCHDVLPEEVL) are Extracellular-facing. An N-linked (GlcNAc...) asparagine glycan is attached at asparagine 224. A helical membrane pass occupies residues 238–271 (VGDMFNYFLSLAIGVFLFPALLTASAYVLMIKTL). The Cytoplasmic segment spans residues 272-279 (RSSAMDEH). A helical transmembrane segment spans residues 280–319 (SEKKRQRAIRLIITVLAMYFICFAPSNLLLVVHYFLIKTQ). Residues 320 to 325 (RQSHVY) lie on the Extracellular side of the membrane. The helical transmembrane segment at 326–349 (ALYLVALCLSTLNSCIDPFVYYFV) threads the bilayer. Residues 350-399 (SKDFRDHARNALLCRSVRTVNRMQISLSSNKFSRKSGSYSSSSTSVKTSY) are Cytoplasmic-facing. Cysteine 363 carries the S-palmitoyl cysteine lipid modification.

The protein belongs to the G-protein coupled receptor 1 family. As to quaternary structure, interacts with TLR4, COPS5 and TMED2. Interacts with GNAQ, GNA11, GNA12, GNA13 and GNA14. Post-translationally, a proteolytic cleavage generates a new N-terminus that functions as a tethered ligand. Activating serine proteases include trypsin, mast cell tryptase, coagulation factors VII and Xa, myeloblastin/PRTN3 and membrane-type serine protease 1/ST14. Proposed subsequent cleavage by serine proteases is leading to receptor deactivation and include neutrophil elastase and cathepsin G. At least in part, implicated proteases are also shown to activate the receptor; the glycosylation status of the receptor is thought to contribute to the difference. N-glycosylated and sialylated. In terms of processing, multiple phosphorylated on serine and threonine residues in the cytoplasmic region upon receptor activation; required for receptor desensitization and recruitment of beta-arrestin. Post-translationally, monoubiquitinated by Cbl at the plasma membrane and in early endosomes; not required for receptor endocytosis but for translocation to late endosomes or lysosomes. Deubiquitination involves Stambp and Usp8; required for lysosomal trafficking and receptor degradation.

The protein resides in the cell membrane. Functionally, receptor for trypsin and trypsin-like enzymes coupled to G proteins. Its function is mediated through the activation of several signaling pathways including phospholipase C (PLC), intracellular calcium, mitogen-activated protein kinase (MAPK), I-kappaB kinase/NF-kappaB and Rho. Can also be transactivated by cleaved F2r/Par1. Involved in modulation of inflammatory responses and regulation of innate and adaptive immunity, and acts as a sensor for proteolytic enzymes generated during infection. Generally is promoting inflammation. Can signal synergistically with Tlr4 and probably Tlr2 in inflammatory responses and modulates Tlr3 signaling. Has a protective role in establishing the endothelial barrier; the activity involves coagulation factor X. Regulates endothelial cell barrier integrity during neutrophil extravasation, probably following proteolytic cleavage by PRTN3. Proposed to have a bronchoprotective role in airway epithelium, but also shown to compromise the airway epithelial barrier by interrupting E-cadherin adhesion. Involved in the regulation of vascular tone; activation results in hypotension presumably mediated by vasodilation. Associates with a subset of G proteins alpha subunits such as GNAQ, GNA11, GNA14, GNA12 and GNA13, but probably not with G(o)-alpha, G(i) subunit alpha-1 and G(i) subunit alpha-2. Believed to be a class B receptor which internalizes as a complex with arrestin and traffic with it to endosomal vesicles, presumably as desensitized receptor, for extended periods of time. Mediates inhibition of TNF-alpha stimulated JNK phosphorylation via coupling to GNAQ and GNA11; the function involves dissociation of Ripk1 and Tradd from Tnfr1. Mediates phosphorylation of nuclear factor NF-kappa-B RELA subunit at 'Ser-536'; the function involves Ikbkb and is predominantly independent of G proteins. Involved in cellular migration. Involved in cytoskeletal rearrangement and chemotaxis through beta-arrestin-promoted scaffolds; the function is independent of GNAQ and GNA11 and involves promotion of cofilin dephosphorylation and actin filament severing. Induces redistribution of Cops5 from the plasma membrane to the cytosol and activation of the JNK cascade is mediated by Cops5. Involved in the recruitment of leukocytes to the sites of inflammation and is the major PAR receptor capable of modulating eosinophil function such as pro-inflammatory cytokine secretion, superoxide production and degranulation. During inflammation promotes dendritic cell maturation, trafficking to the lymph nodes and subsequent T-cell activation. Involved in antimicrobial response of innate immune cells; activation enhances phagocytosis of Gram-positive and killing of Gram-negative bacteria. Acts synergistically with interferon-gamma in enhancing antiviral responses. Mediates activation of pro-inflammatory and pro-fibrotic responses in fibroblasts, triggered by coagulation factor Xa (F10). Probably mediates activation of barrier protective signaling responses in endothelial cells, triggered by coagulation factor Xa (F10). In Mus musculus (Mouse), this protein is Proteinase-activated receptor 2 (F2rl1).